A 198-amino-acid polypeptide reads, in one-letter code: GDP-mannose pyrophosphatase (198 aa).

GDP-alpha-D-mannose-binding positions include 38 to 40 (KRE), Arg67, and 85 to 87 (AGL). The 138-residue stretch at 43–180 (DRGNGATVLL…EIRDGKAVIL (138 aa)) folds into the Nudix hydrolase domain. Ala85, Glu100, and Glu104 together coordinate Mg(2+). Positions 86–106 (GLLDNDEPEACIRKEAVEETG) match the Nudix box motif. GDP-alpha-D-mannose-binding positions include Glu104, Glu127, 150–151 (DE), and Lys176. Mg(2+) is bound at residue Glu151.

This sequence belongs to the Nudix hydrolase family. NudK subfamily. In terms of assembly, homodimer. Mg(2+) is required as a cofactor.

The enzyme catalyses GDP-alpha-D-mannose + H2O = alpha-D-mannose 1-phosphate + GMP + 2 H(+). In terms of biological role, nucleoside diphosphate sugar hydrolase that hydrolyzes GDP-mannose as its preferred substrate, yielding GMP and mannose-1-phosphate. In Klebsiella pneumoniae subsp. pneumoniae (strain ATCC 700721 / MGH 78578), this protein is GDP-mannose pyrophosphatase (nudK).